A 185-amino-acid chain; its full sequence is Elongation factor P (185 aa).

This sequence belongs to the elongation factor P family.

The protein resides in the cytoplasm. The protein operates within protein biosynthesis; polypeptide chain elongation. Its function is as follows. Involved in peptide bond synthesis. Stimulates efficient translation and peptide-bond synthesis on native or reconstituted 70S ribosomes in vitro. Probably functions indirectly by altering the affinity of the ribosome for aminoacyl-tRNA, thus increasing their reactivity as acceptors for peptidyl transferase. In Streptococcus equi subsp. equi (strain 4047), this protein is Elongation factor P.